The primary structure comprises 435 residues: Histidinol dehydrogenase (435 aa).

NAD(+) is bound by residues Tyr131, Gln189, and Asn212. Substrate is bound by residues Ser238, Gln260, and His263. Zn(2+)-binding residues include Gln260 and His263. Catalysis depends on proton acceptor residues Glu327 and His328. Residues His328, Asp361, Glu415, and His420 each contribute to the substrate site. Zn(2+) is bound at residue Asp361. His420 is a Zn(2+) binding site.

Belongs to the histidinol dehydrogenase family. Homodimer. Zn(2+) is required as a cofactor.

It catalyses the reaction L-histidinol + 2 NAD(+) + H2O = L-histidine + 2 NADH + 3 H(+). The protein operates within amino-acid biosynthesis; L-histidine biosynthesis; L-histidine from 5-phospho-alpha-D-ribose 1-diphosphate: step 9/9. In terms of biological role, catalyzes the sequential NAD-dependent oxidations of L-histidinol to L-histidinaldehyde and then to L-histidine. In Buchnera aphidicola subsp. Acyrthosiphon pisum (strain APS) (Acyrthosiphon pisum symbiotic bacterium), this protein is Histidinol dehydrogenase (hisD).